The primary structure comprises 726 residues: Disintegrin and metalloproteinase domain-containing protein 20 (726 aa).

Positions Met1 to Ala31 are cleaved as a signal peptide. Residues Arg32–Gln206 constitute a propeptide that is removed on maturation. A Cysteine switch motif is present at residues Met171 to Glu178. Residue Cys173 coordinates Zn(2+). N-linked (GlcNAc...) asparagine glycans are attached at residues Asn191 and Asn226. In terms of domain architecture, Peptidase M12B spans Arg207–Tyr400. Topologically, residues Arg207 to Tyr693 are extracellular. 3 disulfides stabilise this stretch: Cys317-Cys394, Cys357-Cys379, and Cys359-Cys364. His342 contacts Zn(2+). The active site involves Glu343. The Zn(2+) site is built by His346 and His352. Residues Asn378, Asn438, Asn479, and Asn587 are each glycosylated (N-linked (GlcNAc...) asparagine). One can recognise a Disintegrin domain in the interval Leu407 to Asp493. Cys465 and Cys485 are disulfide-bonded. 3 disulfide bridges follow: Cys635–Cys646, Cys640–Cys652, and Cys654–Cys663. Positions Cys635–Cys663 constitute an EGF-like domain. The chain crosses the membrane as a helical span at residues Leu694–Phe714. The Cytoplasmic segment spans residues Lys715 to Gly726.

The cofactor is Zn(2+). In terms of processing, has no obvious cleavage site for furin endopeptidase, suggesting that the proteolytic processing is regulated. Testis specific.

It localises to the membrane. Its function is as follows. May be involved in sperm maturation and/or fertilization. This chain is Disintegrin and metalloproteinase domain-containing protein 20 (ADAM20), found in Homo sapiens (Human).